Reading from the N-terminus, the 967-residue chain is Leucine-rich repeat receptor-like protein kinase PXC2 (967 aa).

Positions 1 to 20 are cleaved as a signal peptide; that stretch reads MFNGAVSLLFLFLAVVSARA. Residues 21–609 are Extracellular-facing; it reads DPTFNDDVLG…QIRKSVLSIS (589 aa). LRR repeat units follow at residues 91–114, 115–139, 141–164, 165–189, 191–212, 214–236, 237–260, 262–284, 285–307, 308–332, and 334–356; these read LQFL…EFPH, LGSL…FFEQ, GSLR…LSYC, STLT…WFLK, LKSL…LGGL, DLRH…IGRC, SSLK…MKSL, SCSS…IGDI, ATLE…SLGN, LEFL…LSNC, and NLIS…MFTG. Residues Asn-103 and Asn-127 are each glycosylated (N-linked (GlcNAc...) asparagine). Asn-171 is a glycosylation site (N-linked (GlcNAc...) asparagine). N-linked (GlcNAc...) asparagine glycosylation occurs at Asn-219. N-linked (GlcNAc...) asparagine glycosylation is found at Asn-296, Asn-315, and Asn-331. Asn-374 carries an N-linked (GlcNAc...) asparagine glycan. LRR repeat units follow at residues 384–408, 410–432, 433–456, 457–480, 482–503, 504–528, and 530–552; these read LQGL…IWIL, SLLQ…IGGL, KVAE…IGGA, VSLK…ISNC, ALNT…SIGS, LSNL…IEKL, and HLLT…GFFN. N-linked (GlcNAc...) asparagine glycosylation is found at Asn-415, Asn-446, Asn-479, Asn-487, Asn-516, Asn-535, Asn-540, Asn-571, and Asn-587. Residues 610-630 form a helical membrane-spanning segment; that stretch reads ALIAIGAAAVIAIGVVAVTLL. Residues 631–967 lie on the Cytoplasmic side of the membrane; that stretch reads NVHARSSVSR…LIQCPSHDLE (337 aa). The 273-residue stretch at 687–959 folds into the Protein kinase domain; sequence LNKDSELGRG…EEVVKILELI (273 aa). ATP is bound by residues 693–701 and Lys-715; that span reads LGRGGFGVV.

It belongs to the protein kinase superfamily. Ser/Thr protein kinase family. As to expression, expressed in the vascular strands of cotyledons, the shoot apex, hypocotyls, roots, leaves, stems and flowers.

Its subcellular location is the cell membrane. Its function is as follows. Leucine-rich repeat receptor-like protein kinase that may play a role in vascular tissues development. The polypeptide is Leucine-rich repeat receptor-like protein kinase PXC2 (Arabidopsis thaliana (Mouse-ear cress)).